The sequence spans 1055 residues: Protein SUPPRESSOR OF QUENCHING 1, chloroplastic (1055 aa).

A chloroplast-targeting transit peptide spans 1–56 (MALKLTSPPSVFSQSRRLSSSSLIPIRSKSTFTGFRSRTGVYLSKTTALQSSTKLS). V57 is modified (N-acetylvaline). At 59 to 327 (AESPAATIAT…FQGSRRDILR (269 aa)) the chain is on the stromal side. D80 (nucleophile) is an active-site residue. Mg(2+) is bound by residues D80 and D82. D80 serves as a coordination point for substrate. D82 (proton donor) is an active-site residue. Residues E89, 118 to 122 (TGEAK), 141 to 144 (AKER), and 183 to 189 (SSADRIK) contribute to the substrate site. Position 242 (D242) interacts with Mg(2+). A helical transmembrane segment spans residues 328–345 (YGSLGIALSCVYFAATNW). Residues 346–1055 (KAMQYASPKA…AGGLQLQGTR (710 aa)) lie on the Lumenal side of the membrane. The 178-residue stretch at 359-536 (ALVGAKSPSF…LDDVVAAALT (178 aa)) folds into the Thioredoxin domain. The cysteines at positions 431 and 434 are disulfide-linked. 5 NHL repeats span residues 565 to 597 (PLKF…TDLE), 611 to 647 (GFQD…NHAL), 673 to 712 (GRKG…YSVL), 802 to 832 (LQHP…LDPV), and 854 to 887 (GAQL…IDLN).

The protein in the N-terminal section; belongs to the HAD-like hydrolase superfamily. In the C-terminal section; belongs to the thioredoxin family. Mg(2+) is required as a cofactor.

The protein localises to the plastid. The protein resides in the chloroplast thylakoid membrane. Functionally, required to maintain light harvesting efficiency, especially during nonphotochemical quenching (NPQ) recovery, via the regulation of chlorophyll excited-state lifetime probably by preventing the formation of a slowly reversible form of antenna quenching. This Arabidopsis thaliana (Mouse-ear cress) protein is Protein SUPPRESSOR OF QUENCHING 1, chloroplastic.